The sequence spans 417 residues: NADH-quinone oxidoreductase subunit D (417 aa).

It belongs to the complex I 49 kDa subunit family. As to quaternary structure, NDH-1 is composed of 14 different subunits. Subunits NuoB, C, D, E, F, and G constitute the peripheral sector of the complex.

Its subcellular location is the cell inner membrane. The catalysed reaction is a quinone + NADH + 5 H(+)(in) = a quinol + NAD(+) + 4 H(+)(out). Functionally, NDH-1 shuttles electrons from NADH, via FMN and iron-sulfur (Fe-S) centers, to quinones in the respiratory chain. The immediate electron acceptor for the enzyme in this species is believed to be ubiquinone. Couples the redox reaction to proton translocation (for every two electrons transferred, four hydrogen ions are translocated across the cytoplasmic membrane), and thus conserves the redox energy in a proton gradient. This is NADH-quinone oxidoreductase subunit D from Francisella tularensis subsp. novicida (strain U112).